The primary structure comprises 145 residues: MQGLIQRVKHAKVEINNQVVGEIGQGILVLLGVEKQDDEQAADKLLHKISNYRIFTDENDKMNLSLKDIAGELLVVSQFTLAANTKKGMRPSFSSAATPSQANELYEYFVAQAKALNLTVAAGEFGADMQVSLCNDGPVTFNLAV.

A Gly-cisPro motif, important for rejection of L-amino acids motif is present at residues 137–138; it reads GP.

This sequence belongs to the DTD family. In terms of assembly, homodimer.

It localises to the cytoplasm. The enzyme catalyses glycyl-tRNA(Ala) + H2O = tRNA(Ala) + glycine + H(+). The catalysed reaction is a D-aminoacyl-tRNA + H2O = a tRNA + a D-alpha-amino acid + H(+). In terms of biological role, an aminoacyl-tRNA editing enzyme that deacylates mischarged D-aminoacyl-tRNAs. Also deacylates mischarged glycyl-tRNA(Ala), protecting cells against glycine mischarging by AlaRS. Acts via tRNA-based rather than protein-based catalysis; rejects L-amino acids rather than detecting D-amino acids in the active site. By recycling D-aminoacyl-tRNA to D-amino acids and free tRNA molecules, this enzyme counteracts the toxicity associated with the formation of D-aminoacyl-tRNA entities in vivo and helps enforce protein L-homochirality. The protein is D-aminoacyl-tRNA deacylase of Pseudoalteromonas translucida (strain TAC 125).